The following is a 193-amino-acid chain: Dual-action ribosomal maturation protein DarP (193 aa).

Residues 1–10 show a composition bias toward basic and acidic residues; the sequence is MRGRDEETGE. Disordered regions lie at residues 1 to 20 and 171 to 193; these read MRGR…SQQR and QEQG…EDDE. Over residues 178-193 the composition is skewed to acidic residues; sequence GDSELEDGESASEDDE.

This sequence belongs to the DarP family.

Its subcellular location is the cytoplasm. Member of a network of 50S ribosomal subunit biogenesis factors which assembles along the 30S-50S interface, preventing incorrect 23S rRNA structures from forming. Promotes peptidyl transferase center (PTC) maturation. In Xanthomonas axonopodis pv. citri (strain 306), this protein is Dual-action ribosomal maturation protein DarP.